We begin with the raw amino-acid sequence, 609 residues long: Glutamine--fructose-6-phosphate aminotransferase [isomerizing] (609 aa).

Cys2 functions as the Nucleophile; for GATase activity in the catalytic mechanism. Residues 2 to 218 (CGIVGAIAQR…EGDIAEITRR (217 aa)) form the Glutamine amidotransferase type-2 domain. 2 consecutive SIS domains span residues 286–426 (ADEL…LKGL) and 458–599 (LAED…VDQP). Lys604 acts as the For Fru-6P isomerization activity in catalysis.

Homodimer.

It localises to the cytoplasm. It carries out the reaction D-fructose 6-phosphate + L-glutamine = D-glucosamine 6-phosphate + L-glutamate. In terms of biological role, catalyzes the first step in hexosamine metabolism, converting fructose-6P into glucosamine-6P using glutamine as a nitrogen source. The polypeptide is Glutamine--fructose-6-phosphate aminotransferase [isomerizing] (Salmonella paratyphi A (strain ATCC 9150 / SARB42)).